We begin with the raw amino-acid sequence, 161 residues long: MPAPILPLIEAASRWPERGALVGLDLGTKTIGVAVSDPDRRLATGVETIQRKAFKADAARLLAISSERKVVGFVLGLPINMDGSEGPRAQSTRAFARNLANLTDLPIGLWDERLSTAAVERELIGMDVSRARRAEVIDTHAAIFILQGALDRLATLRRSGQ.

Belongs to the YqgF nuclease family.

It is found in the cytoplasm. Functionally, could be a nuclease involved in processing of the 5'-end of pre-16S rRNA. This Bradyrhizobium sp. (strain BTAi1 / ATCC BAA-1182) protein is Putative pre-16S rRNA nuclease.